Consider the following 383-residue polypeptide: Protein RecA (383 aa).

79–86 is an ATP binding site; sequence GPESSGKT.

This sequence belongs to the RecA family.

It is found in the cytoplasm. Functionally, can catalyze the hydrolysis of ATP in the presence of single-stranded DNA, the ATP-dependent uptake of single-stranded DNA by duplex DNA, and the ATP-dependent hybridization of homologous single-stranded DNAs. It interacts with LexA causing its activation and leading to its autocatalytic cleavage. This chain is Protein RecA, found in Streptococcus gordonii (strain Challis / ATCC 35105 / BCRC 15272 / CH1 / DL1 / V288).